Consider the following 248-residue polypeptide: Cytochrome c oxidase subunit 2 (248 aa).

A signal peptide spans 1 to 12 (MLLMNLFTIINN). The Mitochondrial intermembrane portion of the chain corresponds to 13–39 (DVPTPYNMYFQDSTTPHQEGILELHDN). Residues 40–61 (IMFYMLTVLGLVSWMMIIIIKD) form a helical membrane-spanning segment. Residues 62–79 (YKNNPITYKYIKHGQMIE) lie on the Mitochondrial matrix side of the membrane. A helical membrane pass occupies residues 80–104 (IIWTILPAIILLMIAFPSFILLYLC). At 105 to 248 (DEVISPAMTI…PTFLTWLNEQ (144 aa)) the chain is on the mitochondrial intermembrane side. Residues His183, Cys218, Glu220, Cys222, His226, and Met229 each coordinate Cu cation. Glu220 serves as a coordination point for Mg(2+).

It belongs to the cytochrome c oxidase subunit 2 family. Component of the cytochrome c oxidase (complex IV, CIV), a multisubunit enzyme composed of a catalytic core of 3 subunits and several supernumerary subunits. The complex exists as a monomer or a dimer and forms supercomplexes (SCs) in the inner mitochondrial membrane with ubiquinol-cytochrome c oxidoreductase (cytochrome b-c1 complex, complex III, CIII). It depends on Cu cation as a cofactor. Post-translationally, the signal sequence of COX2 is processed by IMP1.

The protein resides in the mitochondrion inner membrane. The enzyme catalyses 4 Fe(II)-[cytochrome c] + O2 + 8 H(+)(in) = 4 Fe(III)-[cytochrome c] + 2 H2O + 4 H(+)(out). Its function is as follows. Component of the cytochrome c oxidase, the last enzyme in the mitochondrial electron transport chain which drives oxidative phosphorylation. The respiratory chain contains 3 multisubunit complexes succinate dehydrogenase (complex II, CII), ubiquinol-cytochrome c oxidoreductase (cytochrome b-c1 complex, complex III, CIII) and cytochrome c oxidase (complex IV, CIV), that cooperate to transfer electrons derived from NADH and succinate to molecular oxygen, creating an electrochemical gradient over the inner membrane that drives transmembrane transport and the ATP synthase. Cytochrome c oxidase is the component of the respiratory chain that catalyzes the reduction of oxygen to water. Electrons originating from reduced cytochrome c in the intermembrane space (IMS) are transferred via the dinuclear copper A center (CU(A)) of subunit 2 and heme A of subunit 1 to the active site in subunit 1, a binuclear center (BNC) formed by heme A3 and copper B (CU(B)). The BNC reduces molecular oxygen to 2 water molecules using 4 electrons from cytochrome c in the IMS and 4 protons from the mitochondrial matrix. The polypeptide is Cytochrome c oxidase subunit 2 (COX2) (Eremothecium gossypii (strain ATCC 10895 / CBS 109.51 / FGSC 9923 / NRRL Y-1056) (Yeast)).